We begin with the raw amino-acid sequence, 241 residues long: Proteasome subunit alpha (241 aa).

This sequence belongs to the peptidase T1A family. In terms of assembly, the 20S proteasome core is composed of 14 alpha and 14 beta subunits that assemble into four stacked heptameric rings, resulting in a barrel-shaped structure. The two inner rings, each composed of seven catalytic beta subunits, are sandwiched by two outer rings, each composed of seven alpha subunits. The catalytic chamber with the active sites is on the inside of the barrel. Has a gated structure, the ends of the cylinder being occluded by the N-termini of the alpha-subunits. Is capped at one or both ends by the proteasome regulatory ATPase, PAN.

The protein localises to the cytoplasm. The formation of the proteasomal ATPase PAN-20S proteasome complex, via the docking of the C-termini of PAN into the intersubunit pockets in the alpha-rings, triggers opening of the gate for substrate entry. Interconversion between the open-gate and close-gate conformations leads to a dynamic regulation of the 20S proteasome proteolysis activity. Functionally, component of the proteasome core, a large protease complex with broad specificity involved in protein degradation. The polypeptide is Proteasome subunit alpha (Methanosphaerula palustris (strain ATCC BAA-1556 / DSM 19958 / E1-9c)).